Consider the following 118-residue polypeptide: Mitochondrial import inner membrane translocase subunit Tim10 B (118 aa).

The short motif at 31-55 is the Twin CX3C motif element; it reads CFQRCVPSLHHRALDAEEEACLHSC. Intrachain disulfides connect Cys-31–Cys-55 and Cys-35–Cys-51. The segment at 89-118 is disordered; it reads SAVPHATAEQLETSPSRSLPSGNLGKGGAG. Residues 98–109 are compositionally biased toward polar residues; sequence QLETSPSRSLPS.

Belongs to the small Tim family. Component of the TIM22 complex, which core is composed of TIMM22, associated with TIMM10 (TIMM10A and/or TIMM10B), TIMM9, AGK and TIMM29.

It is found in the mitochondrion inner membrane. In terms of biological role, component of the TIM22 complex, a complex that mediates the import and insertion of multi-pass transmembrane proteins into the mitochondrial inner membrane. The TIM22 complex forms a twin-pore translocase that uses the membrane potential as the external driving force. In the TIM22 complex, it may act as a docking point for the soluble 70 kDa complex that guides the target proteins in transit through the aqueous mitochondrial intermembrane space. This Bos taurus (Bovine) protein is Mitochondrial import inner membrane translocase subunit Tim10 B (TIMM10B).